Reading from the N-terminus, the 119-residue chain is Large ribosomal subunit protein uL22c (119 aa).

Belongs to the universal ribosomal protein uL22 family. Part of the 50S ribosomal subunit.

It localises to the plastid. It is found in the chloroplast. Its function is as follows. This protein binds specifically to 23S rRNA. Functionally, the globular domain of the protein is located near the polypeptide exit tunnel on the outside of the subunit, while an extended beta-hairpin is found that lines the wall of the exit tunnel in the center of the 70S ribosome. The sequence is that of Large ribosomal subunit protein uL22c (rpl22) from Marchantia polymorpha (Common liverwort).